The following is a 401-amino-acid chain: UDP-N-acetylglucosamine--N-acetylmuramyl-(pentapeptide) pyrophosphoryl-undecaprenol N-acetylglucosamine transferase (401 aa).

The tract at residues 1–24 (MTRISVPAGQERNDGGISVPAGQE) is disordered. Residues 39–41 (TAG), asparagine 157, arginine 194, serine 228, and glutamine 324 contribute to the UDP-N-acetyl-alpha-D-glucosamine site.

It belongs to the glycosyltransferase 28 family. MurG subfamily.

The protein localises to the cell membrane. It catalyses the reaction di-trans,octa-cis-undecaprenyl diphospho-N-acetyl-alpha-D-muramoyl-L-alanyl-D-glutamyl-meso-2,6-diaminopimeloyl-D-alanyl-D-alanine + UDP-N-acetyl-alpha-D-glucosamine = di-trans,octa-cis-undecaprenyl diphospho-[N-acetyl-alpha-D-glucosaminyl-(1-&gt;4)]-N-acetyl-alpha-D-muramoyl-L-alanyl-D-glutamyl-meso-2,6-diaminopimeloyl-D-alanyl-D-alanine + UDP + H(+). The protein operates within cell wall biogenesis; peptidoglycan biosynthesis. Cell wall formation. Catalyzes the transfer of a GlcNAc subunit on undecaprenyl-pyrophosphoryl-MurNAc-pentapeptide (lipid intermediate I) to form undecaprenyl-pyrophosphoryl-MurNAc-(pentapeptide)GlcNAc (lipid intermediate II). The sequence is that of UDP-N-acetylglucosamine--N-acetylmuramyl-(pentapeptide) pyrophosphoryl-undecaprenol N-acetylglucosamine transferase from Mycolicibacterium vanbaalenii (strain DSM 7251 / JCM 13017 / BCRC 16820 / KCTC 9966 / NRRL B-24157 / PYR-1) (Mycobacterium vanbaalenii).